We begin with the raw amino-acid sequence, 290 residues long: Nucleoid occlusion protein (290 aa).

The H-T-H motif DNA-binding region spans 153 to 172 (EALAQRLGKGQSTVANKLRL).

Belongs to the ParB family.

It is found in the cytoplasm. The protein resides in the nucleoid. Functionally, effects nucleoid occlusion by binding relatively nonspecifically to DNA and preventing the assembly of the division machinery in the vicinity of the nucleoid, especially under conditions that disturb the cell cycle. It helps to coordinate cell division and chromosome segregation by preventing the formation of the Z ring through the nucleoid, which would cause chromosome breakage. The chain is Nucleoid occlusion protein from Bacillus mycoides (strain KBAB4) (Bacillus weihenstephanensis).